The chain runs to 81 residues: Sulfur carrier protein TusA (81 aa).

Catalysis depends on C19, which acts as the Cysteine persulfide intermediate.

It belongs to the sulfur carrier protein TusA family. As to quaternary structure, interacts with IscS.

It is found in the cytoplasm. It participates in tRNA modification. Functionally, sulfur carrier protein involved in sulfur trafficking in the cell. Part of a sulfur-relay system required for 2-thiolation during synthesis of 2-thiouridine of the modified wobble base 5-methylaminomethyl-2-thiouridine (mnm(5)s(2)U) in tRNA. Interacts with IscS and stimulates its cysteine desulfurase activity. Accepts an activated sulfur from IscS, which is then transferred to TusD, and thus determines the direction of sulfur flow from IscS to 2-thiouridine formation. Also appears to be involved in sulfur transfer for the biosynthesis of molybdopterin. The sequence is that of Sulfur carrier protein TusA from Serratia proteamaculans (strain 568).